A 383-amino-acid chain; its full sequence is Acetylornithine deacetylase (383 aa).

His-80 contacts Zn(2+). Residue Asp-82 is part of the active site. Asp-112 contributes to the Zn(2+) binding site. The active site involves Glu-144. Residues Glu-145, Glu-169, and His-355 each contribute to the Zn(2+) site.

The protein belongs to the peptidase M20A family. ArgE subfamily. As to quaternary structure, homodimer. Requires Zn(2+) as cofactor. Co(2+) is required as a cofactor. The cofactor is glutathione.

It is found in the cytoplasm. It catalyses the reaction N(2)-acetyl-L-ornithine + H2O = L-ornithine + acetate. Its pathway is amino-acid biosynthesis; L-arginine biosynthesis; L-ornithine from N(2)-acetyl-L-ornithine (linear): step 1/1. Its function is as follows. Catalyzes the hydrolysis of the amide bond of N(2)-acetylated L-amino acids. Cleaves the acetyl group from N-acetyl-L-ornithine to form L-ornithine, an intermediate in L-arginine biosynthesis pathway, and a branchpoint in the synthesis of polyamines. In Shigella flexneri serotype 5b (strain 8401), this protein is Acetylornithine deacetylase.